Consider the following 427-residue polypeptide: Putative zinc protease AlbF (427 aa).

Residue His-66 coordinates Zn(2+). Glu-69 functions as the Proton acceptor in the catalytic mechanism. Residues His-70 and Glu-142 each coordinate Zn(2+).

The protein belongs to the peptidase M16 family. The cofactor is Zn(2+).

In terms of biological role, required for production of the bacteriocin subtilosin. Could catalyze some step in the processing of presubtilosin. This chain is Putative zinc protease AlbF (albF), found in Bacillus subtilis.